The sequence spans 171 residues: AP-3 complex subunit sigma (171 aa).

Belongs to the adaptor complexes small subunit family. Adaptor protein complex 3 (AP-3) is a heterotetramer composed of two large adaptins (delta-type subunit and beta-type subunit), a medium adaptin (mu-type subunit) and a small adaptin (sigma-type subunit).

The protein resides in the endosome membrane. Part of the AP-3 complex, an adaptor-related complex which is essential for the compartmentalization of the endocytic pathway. This chain is AP-3 complex subunit sigma (ap3s1), found in Dictyostelium discoideum (Social amoeba).